The following is a 52-amino-acid chain: NADH dehydrogenase [ubiquinone] 1 alpha subcomplex subunit 4 homolog (52 aa).

Residues Leu-14–Tyr-30 traverse the membrane as a helical segment.

This sequence belongs to the complex I NDUFA4 subunit family.

The protein localises to the mitochondrion inner membrane. Functionally, accessory subunit of the mitochondrial membrane respiratory chain NADH dehydrogenase (Complex I), that is believed to be not involved in catalysis. Complex I functions in the transfer of electrons from NADH to the respiratory chain. The immediate electron acceptor for the enzyme is believed to be ubiquinone. The sequence is that of NADH dehydrogenase [ubiquinone] 1 alpha subcomplex subunit 4 homolog from Schizosaccharomyces pombe (strain 972 / ATCC 24843) (Fission yeast).